The chain runs to 140 residues: Nucleoside diphosphate kinase (140 aa).

Residues Lys11, Phe59, Arg87, Thr93, Arg104, and Asn114 each contribute to the ATP site. His117 acts as the Pros-phosphohistidine intermediate in catalysis.

It belongs to the NDK family. In terms of assembly, homotetramer. It depends on Mg(2+) as a cofactor.

The protein resides in the cytoplasm. The catalysed reaction is a 2'-deoxyribonucleoside 5'-diphosphate + ATP = a 2'-deoxyribonucleoside 5'-triphosphate + ADP. It catalyses the reaction a ribonucleoside 5'-diphosphate + ATP = a ribonucleoside 5'-triphosphate + ADP. In terms of biological role, major role in the synthesis of nucleoside triphosphates other than ATP. The ATP gamma phosphate is transferred to the NDP beta phosphate via a ping-pong mechanism, using a phosphorylated active-site intermediate. This chain is Nucleoside diphosphate kinase, found in Rickettsia canadensis (strain McKiel).